Here is a 351-residue protein sequence, read N- to C-terminus: Dihydroorotate dehydrogenase (quinone) (351 aa).

FMN is bound by residues 61–65 (AGLDK) and T85. Residue K65 participates in substrate binding. Position 110 to 114 (110 to 114 (NRMGF)) interacts with substrate. 2 residues coordinate FMN: N139 and N172. Substrate is bound at residue N172. The Nucleophile role is filled by S175. N177 is a binding site for substrate. FMN is bound by residues K217 and T245. Residue 246 to 247 (NT) coordinates substrate. FMN is bound by residues G268, G297, and 318–319 (YS).

Belongs to the dihydroorotate dehydrogenase family. Type 2 subfamily. Monomer. It depends on FMN as a cofactor.

It localises to the cell membrane. It carries out the reaction (S)-dihydroorotate + a quinone = orotate + a quinol. Its pathway is pyrimidine metabolism; UMP biosynthesis via de novo pathway; orotate from (S)-dihydroorotate (quinone route): step 1/1. Catalyzes the conversion of dihydroorotate to orotate with quinone as electron acceptor. This Xanthomonas euvesicatoria pv. vesicatoria (strain 85-10) (Xanthomonas campestris pv. vesicatoria) protein is Dihydroorotate dehydrogenase (quinone).